We begin with the raw amino-acid sequence, 272 residues long: Nitrogenase iron protein (272 aa).

Residue glycine 8 to serine 15 coordinates ATP. [4Fe-4S] cluster is bound at residue cysteine 94. The residue at position 97 (arginine 97) is an ADP-ribosylarginine; by dinitrogenase reductase ADP-ribosyltransferase. Position 129 (cysteine 129) interacts with [4Fe-4S] cluster.

It belongs to the NifH/BchL/ChlL family. As to quaternary structure, homodimer. The cofactor is [4Fe-4S] cluster. Post-translationally, the reversible ADP-ribosylation of Arg-97 inactivates the nitrogenase reductase and regulates nitrogenase activity.

The catalysed reaction is N2 + 8 reduced [2Fe-2S]-[ferredoxin] + 16 ATP + 16 H2O = H2 + 8 oxidized [2Fe-2S]-[ferredoxin] + 2 NH4(+) + 16 ADP + 16 phosphate + 6 H(+). Its function is as follows. The key enzymatic reactions in nitrogen fixation are catalyzed by the nitrogenase complex, which has 2 components: the iron protein and the molybdenum-iron protein. The protein is Nitrogenase iron protein of Alkaliphilus metalliredigens (strain QYMF).